A 1202-amino-acid chain; its full sequence is Protein jagged-2 (1202 aa).

The Extracellular portion of the chain corresponds to 1-1037 (GACCDGDGRT…ETVVMGGSST (1037 aa)). N-linked (GlcNAc...) asparagine glycosylation is present at Asn-107. Residues 150-194 (VRCDENYYSATCNKFCRPRNDFFGHYTCDQYGNKACMDGWMGKEC) enclose the DSL domain. Intrachain disulfides connect Cys-152–Cys-161, Cys-165–Cys-177, Cys-185–Cys-194, Cys-199–Cys-210, Cys-203–Cys-216, Cys-218–Cys-227, Cys-230–Cys-241, Cys-236–Cys-247, Cys-249–Cys-258, Cys-265–Cys-277, Cys-271–Cys-287, Cys-289–Cys-298, Cys-305–Cys-316, Cys-310–Cys-325, Cys-327–Cys-336, Cys-343–Cys-354, Cys-348–Cys-363, Cys-365–Cys-374, Cys-381–Cys-392, Cys-386–Cys-401, Cys-403–Cys-412, Cys-419–Cys-429, Cys-423–Cys-438, Cys-440–Cys-449, Cys-456–Cys-467, Cys-461–Cys-476, Cys-478–Cys-487, Cys-495–Cys-506, Cys-500–Cys-515, Cys-517–Cys-526, Cys-544–Cys-567, Cys-561–Cys-577, Cys-579–Cys-588, Cys-595–Cys-606, Cys-600–Cys-615, Cys-617–Cys-626, Cys-633–Cys-644, Cys-638–Cys-653, Cys-655–Cys-664, Cys-671–Cys-682, Cys-676–Cys-691, and Cys-693–Cys-702. Residues 195–228 (KEAVCKQGCNLLHGGCTVPGECRCSYGWQGKFCD) form the EGF-like 1 domain. Residues 229-259 (ECVPYPGCVHGSCVEPWHCDCETNWGGLLCD) enclose the EGF-like 2; atypical domain. 2 consecutive EGF-like domains span residues 261–299 (DLNY…KNCE) and 301–337 (AEHA…PTCA). In terms of domain architecture, EGF-like 5; calcium-binding spans 339 to 375 (DIDECASNPCAAGGTCVDQVDGFECICPEQWVGATCQ). Positions 377–413 (DANECEGKPCLNAFSCKNLIGGYYCDCLPGWKGANCH) constitute an EGF-like 6; calcium-binding domain. One can recognise an EGF-like 7; calcium-binding domain in the interval 415-450 (NINDCHGQCQHGGTCKDLVNGYQCVCPRGFGGRHCE). 2 EGF-like domains span residues 452–488 (EYYK…PLCE) and 490–527 (DVDL…KNCS). N-linked (GlcNAc...) asparagine glycosylation occurs at Asn-525. The 61-residue stretch at 529–589 (PRETCPGGAC…DSGFTGTYCH (61 aa)) folds into the EGF-like 10; atypical domain. Asn-574 carries N-linked (GlcNAc...) asparagine glycosylation. The EGF-like 11; calcium-binding domain maps to 591 to 627 (NIDDCMGQPCRNGGTCIDEVDSFACFCPSGWEGELCD). Residues 629–665 (NPNDCLPDPCHSRGRCYDLVNDFYCVCDDGWKDKTCH) form the EGF-like 12; calcium-binding domain. 2 EGF-like domains span residues 667–703 (REFQ…STCT) and 706–742 (KNSS…RTCT). Asn-707 carries an N-linked (GlcNAc...) asparagine glycan. 9 cysteine pairs are disulfide-bonded: Cys-710–Cys-721, Cys-715–Cys-730, Cys-732–Cys-741, Cys-748–Cys-759, Cys-753–Cys-768, Cys-770–Cys-779, Cys-786–Cys-797, Cys-791–Cys-806, and Cys-808–Cys-817. Residues 744–780 (NTNDCNPLPCYNGGICVDGVNWFRCECAPGFAGPDCR) form the EGF-like 15; calcium-binding domain. The EGF-like 16; calcium-binding domain occupies 782 to 818 (NIDECQSSPCAYGATCVDEINGYRCSCPPGRSGPRCQ). N-linked (GlcNAc...) asparagine glycosylation occurs at Asn-1015. The chain crosses the membrane as a helical span at residues 1038–1058 (GLLVPVLCSVFSVLWLACMVI). Over 1059 to 1202 (CVWWTRKRRK…TKDVRCAGRE (144 aa)) the chain is Cytoplasmic. Composition is skewed to basic and acidic residues over residues 1070–1080 (RERSRLPRDES), 1147–1159 (LSRG…RSRE), and 1185–1202 (VDNR…AGRE). The disordered stretch occupies residues 1070–1202 (RERSRLPRDE…TKDVRCAGRE (133 aa)). The residue at position 1080 (Ser-1080) is a Phosphoserine.

It is found in the membrane. Putative Notch ligand involved in the mediation of Notch signaling. May have a role in neurogenesis in the peripheral nervous system, limb development and in the adult brain. This Rattus norvegicus (Rat) protein is Protein jagged-2 (Jag2).